The primary structure comprises 399 residues: Glucosamine kinase (399 aa).

Residues lysine 98, 149–151 (EYL), and aspartate 156 contribute to the ATP site. Aspartate 262 is a D-glucosamine binding site. Positions 267, 279, and 281 each coordinate Mg(2+). The Substrate specificity determinant motif motif lies at 366–381 (QVLREIIYAARHLPRW). Position 370 (glutamate 370) interacts with D-glucosamine.

It belongs to the actinobacterial glucosamine kinase family. As to quaternary structure, monomer. The cofactor is Mg(2+).

It carries out the reaction D-glucosamine + ATP = D-glucosamine 6-phosphate + ADP + H(+). In terms of biological role, catalyzes the ATP-dependent phosphorylation of D-glucosamine (GlcN) to D-glucosamine 6-phosphate. May be involved in the phosphorylation of acquired extracellular GlcN derived from the hydrolysis of chitosan, i.e., in the incorporation of exogenous GlcN into the bacterial GlcNAc metabolism. Is unable to phosphorylate maltose. The sequence is that of Glucosamine kinase from Mycolicibacterium smegmatis (strain ATCC 700084 / mc(2)155) (Mycobacterium smegmatis).